Here is an 87-residue protein sequence, read N- to C-terminus: Kappa-2-bungarotoxin (87 aa).

The first 21 residues, 1–21 (MKTLLLTLVVVTIVCLDLGYT), serve as a signal peptide directing secretion. 5 disulfide bridges follow: Cys24-Cys42, Cys35-Cys63, Cys48-Cys52, Cys67-Cys79, and Cys80-Cys85.

This sequence belongs to the three-finger toxin family. Long-chain subfamily. Kappa-neurotoxin sub-subfamily. As to quaternary structure, homodimer and heterodimer with kappa 3-bungarotoxin; non-covalently linked. In terms of tissue distribution, expressed by the venom gland.

The protein resides in the secreted. In terms of biological role, postsynaptic neurotoxin that binds and inhibits neuronal nicotinic acetylcholine receptors (nAChR) with high affinity (IC(50)&lt;100 nM). Is a selective, and slowly reversible antagonist of alpha-3/CHRNA3-containing and some alpha-4/CHRNA4-containing AChRs. In Bungarus multicinctus (Many-banded krait), this protein is Kappa-2-bungarotoxin.